The primary structure comprises 282 residues: Anamorsin homolog (282 aa).

The segment at 1-140 (MADLQGKAVL…KPVYEVGAAA (140 aa)) is N-terminal SAM-like domain. The tract at residues 141 to 192 (PLKLSFAKKKQSGAAAPAAQVAEVWTIATDDFDDDDLLENDGDELLDAEDLA) is linker. [2Fe-2S] cluster is bound by residues cysteine 203, cysteine 214, cysteine 217, and cysteine 219. The tract at residues 203–219 (CEVGAGGKRRACKNCTC) is fe-S binding site A. 4 residues coordinate [4Fe-4S] cluster: cysteine 243, cysteine 246, cysteine 254, and cysteine 257. 2 consecutive short sequence motifs (cx2C motif) follow at residues 243 to 246 (CGNC) and 254 to 257 (CASC). The fe-S binding site B stretch occupies residues 243-257 (CGNCYLGDAFRCASC).

This sequence belongs to the anamorsin family. Monomer. The cofactor is [2Fe-2S] cluster. It depends on [4Fe-4S] cluster as a cofactor.

The protein localises to the cytoplasm. It is found in the mitochondrion intermembrane space. Component of the cytosolic iron-sulfur (Fe-S) protein assembly (CIA) machinery. Required for the maturation of extramitochondrial Fe-S proteins. Part of an electron transfer chain functioning in an early step of cytosolic Fe-S biogenesis, facilitating the de novo assembly of a [4Fe-4S] cluster on the cytosolic Fe-S scaffold complex. Electrons are transferred from NADPH via a FAD- and FMN-containing diflavin oxidoreductase. Together with the diflavin oxidoreductase, also required for the assembly of the diferric tyrosyl radical cofactor of ribonucleotide reductase (RNR), probably by providing electrons for reduction during radical cofactor maturation in the catalytic small subunit. This is Anamorsin homolog from Monosiga brevicollis (Choanoflagellate).